The chain runs to 363 residues: NAD(P)H-quinone oxidoreductase subunit 1, chloroplastic (363 aa).

The next 6 helical transmembrane spans lie at 30-50 (LVPI…IVWL), 98-118 (FSIG…IIPF), 129-149 (IGVF…LMSG), 248-268 (YSGI…LVSS), 300-320 (VFGT…FLFI), and 336-356 (LLNL…LLTT).

The protein belongs to the complex I subunit 1 family. NDH is composed of at least 16 different subunits, 5 of which are encoded in the nucleus.

Its subcellular location is the plastid. It is found in the chloroplast thylakoid membrane. The catalysed reaction is a plastoquinone + NADH + (n+1) H(+)(in) = a plastoquinol + NAD(+) + n H(+)(out). It carries out the reaction a plastoquinone + NADPH + (n+1) H(+)(in) = a plastoquinol + NADP(+) + n H(+)(out). In terms of biological role, NDH shuttles electrons from NAD(P)H:plastoquinone, via FMN and iron-sulfur (Fe-S) centers, to quinones in the photosynthetic chain and possibly in a chloroplast respiratory chain. The immediate electron acceptor for the enzyme in this species is believed to be plastoquinone. Couples the redox reaction to proton translocation, and thus conserves the redox energy in a proton gradient. The sequence is that of NAD(P)H-quinone oxidoreductase subunit 1, chloroplastic from Vitis vinifera (Grape).